The following is a 1029-amino-acid chain: Pro-apoptotic serine protease NMA111 (1029 aa).

The interval 1–49 (MNGPTSQRAKRKQGSASSLDDRPPKHQRALNGAKQQSTGDNTPEEDMYD) is disordered. The serine protease stretch occupies residues 84 to 274 (VVSIRFCQTC…LPLDRPLRAL (191 aa)). Residues His122, Asp153, and Ser235 each act as charge relay system in the active site. 2 consecutive PDZ domains span residues 307-379 (PEWE…QRGG) and 845-958 (EFLG…VTFD). Positions 997–1029 (KAMEGEPSEGVPAVEEEAGGAVDDDVPMAAVEK) are disordered. The span at 1010–1022 (VEEEAGGAVDDDV) shows a compositional bias: acidic residues.

The protein belongs to the peptidase S1C family.

The protein localises to the nucleus. In terms of biological role, nuclear serine protease which mediates apoptosis. In Pyricularia oryzae (strain 70-15 / ATCC MYA-4617 / FGSC 8958) (Rice blast fungus), this protein is Pro-apoptotic serine protease NMA111 (NMA111).